Consider the following 212-residue polypeptide: 3-isopropylmalate dehydratase small subunit (212 aa).

Belongs to the LeuD family. LeuD type 1 subfamily. As to quaternary structure, heterodimer of LeuC and LeuD.

The enzyme catalyses (2R,3S)-3-isopropylmalate = (2S)-2-isopropylmalate. Its pathway is amino-acid biosynthesis; L-leucine biosynthesis; L-leucine from 3-methyl-2-oxobutanoate: step 2/4. Functionally, catalyzes the isomerization between 2-isopropylmalate and 3-isopropylmalate, via the formation of 2-isopropylmaleate. In Pseudomonas aeruginosa (strain UCBPP-PA14), this protein is 3-isopropylmalate dehydratase small subunit.